The sequence spans 518 residues: MDFTEAYADTCSTVGLAAREGNVKVLRKLLKKGRSVDVADNRGWMPIHEAAYHNSVECLQMLINADSSENYIKMKTFEGFCALHLAASQGHWKIVQILLEAGADPNATTLEETTPLFLAVENGQIDVLRLLLQHGANVNGSHSMCGWNSLHQASFQENAEIIKLLLRKGANKECQDDFGITPLFVAAQYGKLESLSILISSGANVNCQALDKATPLFIAAQEGHTKCVELLLSSGADPDLYCNEDSWQLPIHAAAQMGHTKILDLLIPLTNRACDTGLNKVSPVYSAVFGGHEDCLEILLRNGYSPDAQACLVFGFSSPVCMAFQKDCEFFGIVNILLKYGAQINELHLAYCLKYEKFSIFRYFLRKGCSLGPWNHIYEFVNHAIKAQAKYKEWLPHLLVAGFDPLILLCNSWIDSVSIDTLIFTLEFTNWKTLAPAVERMLSARASNAWILQQHIATVPSLTHLCRLEIRSSLKSERLRSDSYISQLPLPRSLHNYLLYEDVLRMYEVPELAAIQDG.

11 ANK repeats span residues 9-38 (DTCS…SVDV), 42-71 (RGWM…SENY), 78-107 (EGFC…DPNA), 111-140 (EETT…NVNG), 145-174 (CGWN…NKEC), 178-207 (FGIT…NVNC), 211-240 (DKAT…DPDL), 246-275 (SWQL…RACD), 279-308 (NKVS…SPDA), 315-346 (GFSS…QINE), and 348-373 (HLAY…SLGP). Positions 441–504 (MLSARASNAW…HNYLLYEDVL (64 aa)) constitute an SOCS box domain.

Belongs to the ankyrin SOCS box (ASB) family. As to quaternary structure, interacts with ELOB and TNFRSF1B.

It is found in the cytoplasm. It participates in protein modification; protein ubiquitination. Functionally, probable substrate-recognition component of a SCF-like ECS (Elongin-Cullin-SOCS-box protein) E3 ubiquitin-protein ligase complex which mediates the ubiquitination and subsequent proteasomal degradation of target proteins. Recognizes TNFRSF1B. Plays a role in the down-regulation of antiviral innate immunity by targeting MAVS for ubiquitin-proteasomal degradation. Also destabilizes TRAF6 by enhancing its 'Lys-48'-linked polyubiquitination. The protein is Ankyrin repeat and SOCS box protein 3 (ASB3) of Homo sapiens (Human).